The chain runs to 1487 residues: Protein cft1 (1487 aa).

Residues 486–504 (DLDLDDEDLEDDDDDDLYG) show a composition bias toward acidic residues. The disordered stretch occupies residues 486 to 513 (DLDLDDEDLEDDDDDDLYGEESASPEQA).

The protein belongs to the CFT1 family.

The protein localises to the nucleus. In terms of biological role, RNA-binding component of the cleavage and polyadenylation factor (CPF) complex, which plays a key role in polyadenylation-dependent pre-mRNA 3'-end formation and cooperates with cleavage factors including the CFIA complex and hrp1/CFIB. Involved in poly(A) site recognition. May be involved in coupling transcription termination and mRNA 3'-end formation. The sequence is that of Protein cft1 (paa-3) from Neurospora crassa (strain ATCC 24698 / 74-OR23-1A / CBS 708.71 / DSM 1257 / FGSC 987).